Here is a 536-residue protein sequence, read N- to C-terminus: Chaperonin GroEL (536 aa).

ATP contacts are provided by residues 29-32 (TLGP), 86-90 (DGTTT), glycine 412, and aspartate 493.

It belongs to the chaperonin (HSP60) family. Forms a cylinder of 14 subunits composed of two heptameric rings stacked back-to-back. Interacts with the co-chaperonin GroES.

The protein resides in the cytoplasm. It carries out the reaction ATP + H2O + a folded polypeptide = ADP + phosphate + an unfolded polypeptide.. Functionally, together with its co-chaperonin GroES, plays an essential role in assisting protein folding. The GroEL-GroES system forms a nano-cage that allows encapsulation of the non-native substrate proteins and provides a physical environment optimized to promote and accelerate protein folding. This Onion yellows phytoplasma (strain OY-M) protein is Chaperonin GroEL.